The primary structure comprises 191 residues: Adenine phosphoribosyltransferase 5 (191 aa).

It belongs to the purine/pyrimidine phosphoribosyltransferase family. In terms of assembly, homodimer.

The protein localises to the cytoplasm. The catalysed reaction is AMP + diphosphate = 5-phospho-alpha-D-ribose 1-diphosphate + adenine. It participates in purine metabolism; AMP biosynthesis via salvage pathway; AMP from adenine: step 1/1. Catalyzes a salvage reaction resulting in the formation of AMP, that is energically less costly than de novo synthesis. May contribute to the recycling of adenine into adenylate nucleotides and the inactivation of cytokinins by phosphoribosylation. Possesses low activity toward adenine, but can efficiently convert cytokinins from free bases (active form) to the corresponding nucleotides (inactive form). The polypeptide is Adenine phosphoribosyltransferase 5 (APT5) (Arabidopsis thaliana (Mouse-ear cress)).